Reading from the N-terminus, the 172-residue chain is MATYNAIIYSGGYSQTLRDFAGWTGDLLTTIQDMKLHAQEFNSPYDAAMKIIGNMYQFSLDDLFSDVDAINLANKTSVGANAQPLNIAIRDYYSNNDCMNRFTQFVNNRFDGSLDKIFSEAEYYLNTNLDPVVVPIRLAFKRAFDVEDYSEEIGKITAQAFRDVIEKKMISE.

This is an uncharacterized protein from Bacillus subtilis (strain 168).